Here is a 334-residue protein sequence, read N- to C-terminus: Thiamine-binding periplasmic protein (334 aa).

Positions 1–23 are cleaved as a signal peptide; it reads MRLLSLLTFSLFAVIGLAPAAQA. Thiamine-binding positions include 64 to 65, 166 to 167, Trp-202, and 220 to 223; these read DG, AT, and YTTS.

It belongs to the bacterial solute-binding protein 1 family. The complex is composed of two ATP-binding proteins (ThiQ), two transmembrane proteins (ThiP) and a solute-binding protein (ThiB).

The protein localises to the periplasm. In terms of biological role, part of the ABC transporter complex ThiBPQ involved in thiamine import. This chain is Thiamine-binding periplasmic protein (thiB), found in Brucella melitensis biotype 1 (strain ATCC 23456 / CCUG 17765 / NCTC 10094 / 16M).